A 497-amino-acid polypeptide reads, in one-letter code: Glycerol kinase (497 aa).

T12 provides a ligand contact to ADP. T12, T13, and S14 together coordinate ATP. T12 contributes to the sn-glycerol 3-phosphate binding site. R16 is an ADP binding site. Residues R82, E83, Y134, and D243 each contribute to the sn-glycerol 3-phosphate site. Glycerol is bound by residues R82, E83, Y134, D243, and Q244. Residues T265 and G308 each contribute to the ADP site. Residues T265, G308, Q312, and G409 each contribute to the ATP site. Residues G409 and N413 each contribute to the ADP site.

Belongs to the FGGY kinase family. In terms of assembly, homotetramer and homodimer (in equilibrium).

It carries out the reaction glycerol + ATP = sn-glycerol 3-phosphate + ADP + H(+). The protein operates within polyol metabolism; glycerol degradation via glycerol kinase pathway; sn-glycerol 3-phosphate from glycerol: step 1/1. With respect to regulation, activated by phosphorylation and inhibited by fructose 1,6-bisphosphate (FBP). Functionally, key enzyme in the regulation of glycerol uptake and metabolism. Catalyzes the phosphorylation of glycerol to yield sn-glycerol 3-phosphate. The chain is Glycerol kinase from Thermoanaerobacter pseudethanolicus (strain ATCC 33223 / 39E) (Clostridium thermohydrosulfuricum).